The sequence spans 481 residues: Arylsulfatase (481 aa).

3 residues coordinate Ca(2+): Asp11, Gln12, and Cys51. Cys51 functions as the Nucleophile in the catalytic mechanism. The residue at position 51 (Cys51) is a 3-oxoalanine (Cys). Residue His102 is part of the active site. Ca(2+) is bound by residues Asp302 and His303.

Belongs to the sulfatase family. The cofactor is Ca(2+). In terms of processing, the conversion to 3-oxoalanine (also known as C-formylglycine, FGly), of a serine or cysteine residue in prokaryotes and of a cysteine residue in eukaryotes, is critical for catalytic activity.

It carries out the reaction an aryl sulfate + H2O = a phenol + sulfate + H(+). In terms of biological role, has sulfatase activity toward para-nitrophenyl sulfate, which is increased in presence of calcium ion. This is Arylsulfatase from Clostridium perfringens (strain 13 / Type A).